Consider the following 244-residue polypeptide: 5-oxoprolinase subunit A (244 aa).

The protein belongs to the LamB/PxpA family. In terms of assembly, forms a complex composed of PxpA, PxpB and PxpC.

It catalyses the reaction 5-oxo-L-proline + ATP + 2 H2O = L-glutamate + ADP + phosphate + H(+). Catalyzes the cleavage of 5-oxoproline to form L-glutamate coupled to the hydrolysis of ATP to ADP and inorganic phosphate. The protein is 5-oxoprolinase subunit A of Shigella boydii serotype 18 (strain CDC 3083-94 / BS512).